A 114-amino-acid chain; its full sequence is Neurotrophic factor BDNF precursor form (114 aa).

3 cysteine pairs are disulfide-bonded: Cys-14–Cys-81, Cys-59–Cys-110, and Cys-69–Cys-112.

This sequence belongs to the NGF-beta family.

Its subcellular location is the secreted. Its function is as follows. Promotes the survival of neuronal populations that are all located either in the central nervous system or directly connected to it. The protein is Neurotrophic factor BDNF precursor form (bdnf) of Xenopus laevis (African clawed frog).